The chain runs to 471 residues: Isochorismate synthase MenF (471 aa).

The active-site Proton acceptor is the lysine 226. Glutamate 275 serves as the catalytic Proton donor. Residues glutamate 319 and glutamate 454 each coordinate Mg(2+).

The protein belongs to the isochorismate synthase family. It depends on Mg(2+) as a cofactor.

The enzyme catalyses chorismate = isochorismate. It participates in quinol/quinone metabolism; 1,4-dihydroxy-2-naphthoate biosynthesis; 1,4-dihydroxy-2-naphthoate from chorismate: step 1/7. Its pathway is quinol/quinone metabolism; menaquinone biosynthesis. Its function is as follows. Catalyzes the conversion of chorismate to isochorismate. This is Isochorismate synthase MenF from Bacillus subtilis (strain 168).